The sequence spans 198 residues: Na(+)-translocating NADH-quinone reductase subunit E (198 aa).

6 helical membrane passes run 11-31 (SVFI…FLAV), 35-55 (VSTA…AVPA), 77-97 (FLNF…LEMI), 110-130 (GIFL…SFMV), 140-160 (VVYG…LAGL), and 176-196 (LGIT…FSGI).

Belongs to the NqrDE/RnfAE family. In terms of assembly, composed of six subunits; NqrA, NqrB, NqrC, NqrD, NqrE and NqrF.

It is found in the cell inner membrane. It catalyses the reaction a ubiquinone + n Na(+)(in) + NADH + H(+) = a ubiquinol + n Na(+)(out) + NAD(+). Its function is as follows. NQR complex catalyzes the reduction of ubiquinone-1 to ubiquinol by two successive reactions, coupled with the transport of Na(+) ions from the cytoplasm to the periplasm. NqrA to NqrE are probably involved in the second step, the conversion of ubisemiquinone to ubiquinol. This is Na(+)-translocating NADH-quinone reductase subunit E from Actinobacillus pleuropneumoniae serotype 5b (strain L20).